The sequence spans 508 residues: Photosystem II CP47 reaction center protein (508 aa).

6 consecutive transmembrane segments (helical) span residues 21–36 (SVHI…WAGS), 101–115 (IVFS…IWHW), 140–156 (GIHL…FGAF), 203–218 (IAAG…FHLS), 237–252 (VLSS…AFIV), and 457–472 (TFAL…HGAR).

It belongs to the PsbB/PsbC family. PsbB subfamily. In terms of assembly, PSII is composed of 1 copy each of membrane proteins PsbA, PsbB, PsbC, PsbD, PsbE, PsbF, PsbH, PsbI, PsbJ, PsbK, PsbL, PsbM, PsbT, PsbX, PsbY, PsbZ, Psb30/Ycf12, at least 3 peripheral proteins of the oxygen-evolving complex and a large number of cofactors. It forms dimeric complexes. Binds multiple chlorophylls. PSII binds additional chlorophylls, carotenoids and specific lipids. serves as cofactor.

The protein localises to the plastid. Its subcellular location is the chloroplast thylakoid membrane. Its function is as follows. One of the components of the core complex of photosystem II (PSII). It binds chlorophyll and helps catalyze the primary light-induced photochemical processes of PSII. PSII is a light-driven water:plastoquinone oxidoreductase, using light energy to abstract electrons from H(2)O, generating O(2) and a proton gradient subsequently used for ATP formation. This Pinus thunbergii (Japanese black pine) protein is Photosystem II CP47 reaction center protein.